The chain runs to 353 residues: UDP-N-acetylglucosamine--N-acetylmuramyl-(pentapeptide) pyrophosphoryl-undecaprenol N-acetylglucosamine transferase (353 aa).

Residues 10–12 (TGG), asparagine 124, serine 183, and glutamine 283 contribute to the UDP-N-acetyl-alpha-D-glucosamine site.

It belongs to the glycosyltransferase 28 family. MurG subfamily.

The protein resides in the cell inner membrane. It catalyses the reaction di-trans,octa-cis-undecaprenyl diphospho-N-acetyl-alpha-D-muramoyl-L-alanyl-D-glutamyl-meso-2,6-diaminopimeloyl-D-alanyl-D-alanine + UDP-N-acetyl-alpha-D-glucosamine = di-trans,octa-cis-undecaprenyl diphospho-[N-acetyl-alpha-D-glucosaminyl-(1-&gt;4)]-N-acetyl-alpha-D-muramoyl-L-alanyl-D-glutamyl-meso-2,6-diaminopimeloyl-D-alanyl-D-alanine + UDP + H(+). It participates in cell wall biogenesis; peptidoglycan biosynthesis. Cell wall formation. Catalyzes the transfer of a GlcNAc subunit on undecaprenyl-pyrophosphoryl-MurNAc-pentapeptide (lipid intermediate I) to form undecaprenyl-pyrophosphoryl-MurNAc-(pentapeptide)GlcNAc (lipid intermediate II). The sequence is that of UDP-N-acetylglucosamine--N-acetylmuramyl-(pentapeptide) pyrophosphoryl-undecaprenol N-acetylglucosamine transferase from Helicobacter pylori (strain P12).